The primary structure comprises 431 residues: Adenylosuccinate synthetase (431 aa).

GTP contacts are provided by residues 13 to 19 (GDEGKGK) and 41 to 43 (GHT). Residue Asp-14 is the Proton acceptor of the active site. Residues Asp-14 and Gly-41 each coordinate Mg(2+). IMP is bound by residues 14–17 (DEGK), 39–42 (NAGH), Thr-130, Arg-144, Gln-225, Thr-240, and Arg-304. His-42 acts as the Proton donor in catalysis. 300–306 (ATTGRKR) lines the substrate pocket. GTP is bound by residues Arg-306, 332-334 (KLD), and 415-417 (STG).

Belongs to the adenylosuccinate synthetase family. As to quaternary structure, homodimer. Requires Mg(2+) as cofactor.

It is found in the cytoplasm. It carries out the reaction IMP + L-aspartate + GTP = N(6)-(1,2-dicarboxyethyl)-AMP + GDP + phosphate + 2 H(+). The protein operates within purine metabolism; AMP biosynthesis via de novo pathway; AMP from IMP: step 1/2. In terms of biological role, plays an important role in the de novo pathway of purine nucleotide biosynthesis. Catalyzes the first committed step in the biosynthesis of AMP from IMP. This chain is Adenylosuccinate synthetase, found in Shewanella amazonensis (strain ATCC BAA-1098 / SB2B).